Here is a 452-residue protein sequence, read N- to C-terminus: Protein CLT3, chloroplastic (452 aa).

The transit peptide at 1–34 (MATTSRRFTTGLFASITSVKSHSANRPQSISLIR) directs the protein to the chloroplast. 10 consecutive transmembrane segments (helical) span residues 105–125 (AEIVIWAAVTAAFGVGNRVMY), 137–157 (FFLAQLSTFGYVAVYYTILYF), 175–195 (PFLIVGILEALAAAAGMAAAA), 202–222 (TTVLSQTFLVWQIFFSIIFLG), 230–250 (ILGCTLVALGVIVSVASGSGA), 258–278 (GVLWILLMVLSFLLQGAGTVL), 307–327 (FQAICIALLLPFLSKLWGIPF), 353–373 (GAPFLPLLFVIMNIGYNIALL), 389–409 (TVSVPIAVFLFTMPLPYLGVA), and 412–432 (LPKGFMGGTIILVLGMILYSW).

Belongs to the CRT-like transporter family.

Its subcellular location is the plastid. The protein resides in the chloroplast membrane. Functionally, involved in thiol transport from the plastid to the cytosol. Transports probably both glutathione (GSH) and its precursor, gamma-glutamylcysteine (gamma-EC). Exhibits some functional redundancy with CLT1 in maintaining the root GSH pool. This Arabidopsis thaliana (Mouse-ear cress) protein is Protein CLT3, chloroplastic.